A 565-amino-acid polypeptide reads, in one-letter code: Bicyclogermacrene synthase (565 aa).

The Mg(2+) site is built by aspartate 317, aspartate 321, aspartate 461, and glutamate 469. The DDXXD motif signature appears at 317 to 321; the sequence is DDTFD.

Belongs to the terpene synthase family. Mg(2+) serves as cofactor.

It catalyses the reaction (2E,6E)-farnesyl diphosphate = bicyclogermacrene + diphosphate. The protein operates within secondary metabolite biosynthesis; terpenoid biosynthesis. Its function is as follows. Sesquiterpene synthase converting farnesyl diphosphate to bicyclogermacrene as the major product. The sequence is that of Bicyclogermacrene synthase from Phyla dulcis (Aztec sweet herb).